We begin with the raw amino-acid sequence, 173 residues long: MSKEKEVLLNDEIQADEIRCIGDDGKVYGIISSDEALDIANRLGLDLVMIAPEAKPPVCKIMDYGKFRYQQEKKQKEAKKKQKVIDIKEIKLSVKIAQNDINYKVKHASEFLEQGKHVKFRVFLKGREMGSPEAGVALLEKIWQMVEDIADRDKEPLLEGRYVNMLVTPKKKK.

The protein belongs to the IF-3 family. As to quaternary structure, monomer.

Its subcellular location is the cytoplasm. In terms of biological role, IF-3 binds to the 30S ribosomal subunit and shifts the equilibrium between 70S ribosomes and their 50S and 30S subunits in favor of the free subunits, thus enhancing the availability of 30S subunits on which protein synthesis initiation begins. This Campylobacter lari (strain RM2100 / D67 / ATCC BAA-1060) protein is Translation initiation factor IF-3.